The chain runs to 417 residues: Probable dihydrofolate synthetase (417 aa).

An ATP-binding site is contributed by 34–37 (GKGS). 3 residues coordinate Mg(2+): serine 58, glutamate 123, and histidine 151. 2 residues coordinate ATP: arginine 274 and aspartate 289.

Belongs to the folylpolyglutamate synthase family.

It carries out the reaction 7,8-dihydropteroate + L-glutamate + ATP = 7,8-dihydrofolate + ADP + phosphate + H(+). It participates in cofactor biosynthesis; tetrahydrofolylpolyglutamate biosynthesis. Glutamate-adding enzyme which catalyzes the binding of the first glutamyl side chain to dihydropteroate. Leads to the de nove synthesis of tetrahydrofolate. de novo. This chain is Probable dihydrofolate synthetase (fol3), found in Schizosaccharomyces pombe (strain 972 / ATCC 24843) (Fission yeast).